Reading from the N-terminus, the 136-residue chain is Small ribosomal subunit protein bS6 (136 aa).

The tract at residues 96–136 is disordered; the sequence is VTEPSALARSGSDAEADRAPADEGSVEAAGAEPGSEAEAEA.

Belongs to the bacterial ribosomal protein bS6 family.

Its function is as follows. Binds together with bS18 to 16S ribosomal RNA. The protein is Small ribosomal subunit protein bS6 of Methylococcus capsulatus (strain ATCC 33009 / NCIMB 11132 / Bath).